Here is a 293-residue protein sequence, read N- to C-terminus: Homoserine kinase (293 aa).

83–93 (PITRGMGSSSA) contacts ATP.

It belongs to the GHMP kinase family. Homoserine kinase subfamily.

Its subcellular location is the cytoplasm. The enzyme catalyses L-homoserine + ATP = O-phospho-L-homoserine + ADP + H(+). It functions in the pathway amino-acid biosynthesis; L-threonine biosynthesis; L-threonine from L-aspartate: step 4/5. Functionally, catalyzes the ATP-dependent phosphorylation of L-homoserine to L-homoserine phosphate. This Helicobacter pylori (strain J99 / ATCC 700824) (Campylobacter pylori J99) protein is Homoserine kinase.